The sequence spans 127 residues: MSSITKEQVVEFIANMTVLELSEFIKELEEKFGVSAAAPAMAMVAAGPAEAAPAEEEKTEFDVILKAAGANKIGVIKVVRALTGLGLKEAKDKVDGAPSTLKEAVSKEEAEEAKKQLVEAGAEVEVK.

2 positions are modified to N6-methyllysine: K77 and K88.

This sequence belongs to the bacterial ribosomal protein bL12 family. In terms of assembly, homodimer. Part of the ribosomal stalk of the 50S ribosomal subunit. Forms a multimeric L10(L12)X complex, where L10 forms an elongated spine to which 2 to 4 L12 dimers bind in a sequential fashion. Binds GTP-bound translation factors.

In terms of biological role, forms part of the ribosomal stalk which helps the ribosome interact with GTP-bound translation factors. Is thus essential for accurate translation. The protein is Large ribosomal subunit protein bL12 of Nitratidesulfovibrio vulgaris (strain DSM 19637 / Miyazaki F) (Desulfovibrio vulgaris).